We begin with the raw amino-acid sequence, 302 residues long: Merozoite surface protein 2 (302 aa).

Positions 1–20 (MKVIKTLSIINFFIFVTFNI) are cleaved as a signal peptide. N-linked (GlcNAc...) asparagine glycans are attached at residues asparagine 22 and asparagine 36. The interval 44 to 228 (EESKPPTGAV…EQTESPELQS (185 aa)) is polymorphic region. One copy of the 1; partial repeat lies at 55–60 (GSGAGA). Residues 55–113 (GSGAGAGSGAGAVAGSGAGAVAGSGAGAVAGSGAGAVAGSGAGAVAGSGAGAVAGSGAG) are 8 X 8 AA tandem repeats of G-S-G-A-G-A-V-A. 6 consecutive repeat copies span residues 61-68 (GSGAGAVA), 69-76 (GSGAGAVA), 77-84 (GSGAGAVA), 85-92 (GSGAGAVA), 93-100 (GSGAGAVA), and 101-108 (GSGAGAVA). The 8; partial repeat unit spans residues 109 to 113 (GSGAG). Residues 114–263 (NGANPGADAE…DSQKECTDGN (150 aa)) are disordered. Positions 125-150 (SPSTPATTTTTTTTNDAEASTSTSSE) are enriched in low complexity. A compositionally biased stretch (basic and acidic residues) spans 151-167 (NRNHNNAETNPKGKGEV). Composition is skewed to polar residues over residues 169-195 (KPNQ…NVPR) and 202-230 (KSPT…QSAP). N-linked (GlcNAc...) asparagine glycosylation occurs at asparagine 179. Residue asparagine 251 is glycosylated (N-linked (GlcNAc...) asparagine). Cysteine 259 and cysteine 267 are joined by a disulfide. N-linked (GlcNAc...) asparagine glycans are attached at residues asparagine 275 and asparagine 276. Asparagine 276 carries the GPI-anchor amidated asparagine lipid modification. The propeptide at 277–302 (SSNIASINKFVVLISATLVLSFAIFI) is removed in mature form.

It localises to the cell membrane. May play a role in the merozoite attachment to the erythrocyte. In Plasmodium falciparum (isolate tak 9), this protein is Merozoite surface protein 2.